An 85-amino-acid polypeptide reads, in one-letter code: Large ribosomal subunit protein bL27 (85 aa).

Positions 1–22 (MAHKKGGGSSRNGRDSNAQRRG) are disordered.

The protein belongs to the bacterial ribosomal protein bL27 family.

In Sorangium cellulosum (strain So ce56) (Polyangium cellulosum (strain So ce56)), this protein is Large ribosomal subunit protein bL27.